The following is a 203-amino-acid chain: Apoptosis-associated speck-like protein containing a CARD (203 aa).

Residues 1-91 enclose the Pyrin domain; sequence MAESFKEHLQ…DDLLRNTGQS (91 aa). Residues 112 to 203 form the CARD domain; sequence VAFSKVNFID…FLMDDLEDAE (92 aa).

As to quaternary structure, self-associates (via pyrin and CARD domains). Interacts (via pyrin domain) with caspa (via pyrin domain). Interacts with caspb; the interaction only occurs in the presence of nlrp1. Component of NLRP1 inflammasomes. Inflammasomes are supramolecular complexes that assemble in the cytosol in response to pathogens and other damage-associated signals and play critical roles in innate immunity and inflammation. The NLRP1 inflammasome is composed of the signal sensor nlrp1, and the adapter pycard (asc), which recruit effector pro-inflammatory caspases caspa and/or caspb. The interaction between nlrp1 and pycard is required for the sequential recruitment of caspa and then caspb. Within the complex caspa is preferentially recruited first and this causes the cleavage of pro-il1b into the midformed il1b. This is followed by the recruitment of caspb, which is activated and cleaves the midformed il1b resulting in il1b maturation. Interacts (via pyrin domain) with NLP3X1 (via pyrin domain). Interacts with gbp4. In terms of tissue distribution, expressed in the kidney, intestine and gill. Expressed at low levels in the heart.

It localises to the cytoplasm. Its subcellular location is the inflammasome. In terms of biological role, functions as a key mediator in apoptosis and inflammation. Promotes caspase-mediated apoptosis. Induces proteolytic processing of caspa and caspa-dependent apoptosis. Involved in innate immune response by acting as an integral adapter in the assembly of various inflammasomes which recruit and activate caspase-1 leading to processing and secretion of pro-inflammatory cytokines. Caspase-1-dependent inflammation leads to macrophage pyroptosis, a form of cell death. The function as activating adapter in different types of inflammasomes is mediated by the pyrin and CARD domains and their homotypic interactions. Clustered PYCARD nucleates the formation of caspase-1 filaments through the interaction of their respective CARD domains, acting as a platform for of caspase-1 polymerization. Also involved in transcriptional activation of cytokines and chemokines independent of the inflammasome. This chain is Apoptosis-associated speck-like protein containing a CARD (pycard), found in Danio rerio (Zebrafish).